The chain runs to 279 residues: Pantothenate synthetase (279 aa).

31 to 38 is a binding site for ATP; it reads MGALHEGH. His-38 (proton donor) is an active-site residue. A (R)-pantoate-binding site is contributed by Gln-62. A beta-alanine-binding site is contributed by Gln-62. An ATP-binding site is contributed by 148 to 151; it reads GEKD. Gln-154 serves as a coordination point for (R)-pantoate. ATP contacts are provided by residues Val-177 and 185-188; that span reads LSSR.

This sequence belongs to the pantothenate synthetase family. As to quaternary structure, homodimer.

Its subcellular location is the cytoplasm. It carries out the reaction (R)-pantoate + beta-alanine + ATP = (R)-pantothenate + AMP + diphosphate + H(+). It functions in the pathway cofactor biosynthesis; (R)-pantothenate biosynthesis; (R)-pantothenate from (R)-pantoate and beta-alanine: step 1/1. Functionally, catalyzes the condensation of pantoate with beta-alanine in an ATP-dependent reaction via a pantoyl-adenylate intermediate. The sequence is that of Pantothenate synthetase from Cereibacter sphaeroides (strain ATCC 17029 / ATH 2.4.9) (Rhodobacter sphaeroides).